Consider the following 328-residue polypeptide: Malate dehydrogenase (328 aa).

12–18 is a binding site for NAD(+); it reads GAAGQIG. Arg95 and Arg101 together coordinate substrate. NAD(+) contacts are provided by residues Asn108, Gln115, and 132 to 134; that span reads VGN. Substrate contacts are provided by Asn134 and Arg165. His190 (proton acceptor) is an active-site residue.

The protein belongs to the LDH/MDH superfamily. MDH type 2 family.

It catalyses the reaction (S)-malate + NAD(+) = oxaloacetate + NADH + H(+). Functionally, catalyzes the reversible oxidation of malate to oxaloacetate. This is Malate dehydrogenase from Leptothrix cholodnii (strain ATCC 51168 / LMG 8142 / SP-6) (Leptothrix discophora (strain SP-6)).